We begin with the raw amino-acid sequence, 705 residues long: 3-hydroxypropionate--CoA ligase [ADP-forming] (705 aa).

In terms of domain architecture, ATP-grasp spans 25–61 (KSILKNYGVKVPPYALVTSAEEAAKEAKKIGFPLVMK). ATP is bound at residue 51 to 61 (AKKIGFPLVMK).

The protein in the N-terminal section; belongs to the acetate CoA ligase beta subunit family. In the C-terminal section; belongs to the acetate CoA ligase alpha subunit family. The cofactor is Mg(2+). It depends on Mn(2+) as a cofactor.

It carries out the reaction 3-hydroxypropanoate + ATP + CoA = 3-hydroxypropanoyl-CoA + ADP + phosphate. In terms of biological role, involved in thaumarchaeal hydroxypropionate/hydroxybutyrate (HP/HB) cycle, a modified version of the autotrophic HP/HB cycle of Crenarchaeota. Catalyzes the formation of 3-hydroxypropionyl-CoA, ADP and phosphate from 3-hydroxypropionate, coenzyme A (CoA) and ATP. Can also use 4-hydroxybutyrate, propionate and butyrate, with poor catalytic efficiency. The chain is 3-hydroxypropionate--CoA ligase [ADP-forming] from Nitrosopumilus maritimus (strain SCM1).